The primary structure comprises 628 residues: 69 kDa protein (628 aa).

Disordered stretches follow at residues 1–25, 141–332, 346–404, 418–493, and 535–628; these read MSNG…SAPD, HFHA…FRPS, LGHL…LLPN, RGKI…DPVL, and QTVL…PDTD. Low complexity predominate over residues 299–312; the sequence is PPTTTSRPTGPPSR. Over residues 320–331 the composition is skewed to polar residues; it reads YQSSPHTPNFRP. A compositionally biased stretch (pro residues) spans 434–450; it reads GAPPPPRRLPSPAPRPQ.

The protein belongs to the tymoviridae protein p69 family.

Functionally, acts as a suppressor of RNA-mediated gene silencing, also known as post-transcriptional gene silencing (PTGS), a mechanism of plant viral defense that limits the accumulation of viral RNAs. In Brassica (Chinese cabbage), this protein is 69 kDa protein.